A 254-amino-acid polypeptide reads, in one-letter code: Glutathione S-transferase U12 (254 aa).

The Nuclear localization signal motif lies at 19–23 (KKRKK). The GST N-terminal domain occupies 33 to 114 (TTVKLIGTWA…YVDESWPSDL (82 aa)). Glutathione is bound by residues 43–44 (SP), 71–72 (GK), 85–86 (KV), and 98–99 (ES). The GST C-terminal domain occupies 120 to 252 (LPSERAFARF…EFIEFAKKKF (133 aa)).

The protein belongs to the GST superfamily. Tau family.

Its subcellular location is the nucleus. It carries out the reaction RX + glutathione = an S-substituted glutathione + a halide anion + H(+). May be involved in the conjugation of reduced glutathione to a wide number of exogenous and endogenous hydrophobic electrophiles and have a detoxification role against certain herbicides. The protein is Glutathione S-transferase U12 (GSTU12) of Arabidopsis thaliana (Mouse-ear cress).